Here is a 654-residue protein sequence, read N- to C-terminus: Acetyl-coenzyme A synthetase (654 aa).

CoA is bound by residues 190 to 193 and Thr-313; that span reads RGGK. ATP-binding positions include 389 to 391, 413 to 418, Asp-504, and Arg-519; these read GEP and DTWWQT. CoA is bound at residue Ser-527. Arg-530 contacts ATP. Residues Val-541 and Val-546 each contribute to the Mg(2+) site. Lys-613 is modified (N6-acetyllysine).

This sequence belongs to the ATP-dependent AMP-binding enzyme family. Mg(2+) serves as cofactor. Acetylated. Deacetylation by the SIR2-homolog deacetylase activates the enzyme.

The catalysed reaction is acetate + ATP + CoA = acetyl-CoA + AMP + diphosphate. Catalyzes the conversion of acetate into acetyl-CoA (AcCoA), an essential intermediate at the junction of anabolic and catabolic pathways. AcsA undergoes a two-step reaction. In the first half reaction, AcsA combines acetate with ATP to form acetyl-adenylate (AcAMP) intermediate. In the second half reaction, it can then transfer the acetyl group from AcAMP to the sulfhydryl group of CoA, forming the product AcCoA. The chain is Acetyl-coenzyme A synthetase from Leptospira borgpetersenii serovar Hardjo-bovis (strain L550).